The primary structure comprises 1541 residues: Regulator of G-protein signaling loco (1541 aa).

Residues 1-66 (MHHHHPPLPI…RRKKRANYNY (66 aa)) are disordered. Low complexity predominate over residues 11–36 (TGASGSTAVGTGAAAAEDASPAANSG). Over residues 40–53 (ISTSTTPSGSNSQQ) the composition is skewed to polar residues. Residues 71 to 148 (TVEVRRGYNG…SIRMQIAENY (78 aa)) enclose the PDZ domain. The interval 182–222 (AKLHRLRNSPQKKLNPPEAVEPHKSKSSPDHPTLKPVLEDP) is disordered. A compositionally biased stretch (basic and acidic residues) spans 201-214 (VEPHKSKSSPDHPT). Residues 247–423 (AALECRVIVG…VVNLVRSMYT (177 aa)) enclose the PID domain. Disordered regions lie at residues 449 to 473 (GAVAAAHSPQPSNHSEISTTTSNSD) and 708 to 761 (SEPD…ASMN). Polar residues-rich tracts occupy residues 457–473 (PQPSNHSEISTTTSNSD) and 744–761 (EQQQLGQSSPVRRTASMN). The region spanning 827-943 (SFERMLQDAA…IRSDLYKSCV (117 aa)) is the RGS domain. Residues 978 to 1004 (SASNAEDRRRKSLLPWHRKTRSKSRDR) are disordered. Residues 987-999 (RKSLLPWHRKTRS) show a composition bias toward basic residues. RBD domains lie at 1072 to 1142 (SLCR…IERR) and 1143 to 1213 (VAFK…IVMV). The interval 1258–1327 (DAAASEKSRP…SEEAATTQAV (70 aa)) is disordered. Over residues 1273 to 1285 (MKSNEAPSETSSL) the composition is skewed to polar residues. A compositionally biased stretch (low complexity) spans 1312–1325 (TSSSQQSEEAATTQ). The 23-residue stretch at 1354–1376 (QDELLEGLKRAQLARLEDQRGTE) folds into the GoLoco domain. The segment at 1410-1513 (KVPATPTEIP…ASKPGTFASK (104 aa)) is disordered. Over residues 1460–1469 (APPPLPPKPK) the composition is skewed to pro residues. Over residues 1483–1499 (PTGNYCNKYSPSKQVPT) the composition is skewed to polar residues.

As to quaternary structure, interacts (via GoLoco and RGS domains) with Galphai (via GDP- or GTP-bound forms). In terms of tissue distribution, expressed in surface and longitudinal glial cells, gut and heart (at protein level).

Its subcellular location is the cytoplasm. The protein resides in the cell membrane. It localises to the apical cell membrane. Functionally, acts as a regulator of G protein signaling (RGS). Modulates G protein alpha subunits nucleotide exchange and hydrolysis activities by functioning either as a GTPase-activating protein (GAP), thereby driving G protein alpha subunits into their inactive GDP-bound form, or as a GDP-dissociation inhibitor (GDI). Confers GDI and GAP activities on G(i) alpha subunit Galphai. Confers GAP activity on G(o)-alpha subunit Galphao and G(i) alpha subunit Galphai. Involved in the dorsal-ventral axis formation of the egg. Acts as a G-protein signaling for glial cell differentiation during embryogenesis; Galphai, Galphao and the G-protein coupled receptor, moody, are required in the surface glia to achieve effective insulation of the nerve cord. May be essential for nurse cell dumping during oogenesis. Required in neuroblast asymmetrical cell division. Plays a role in stress resistance and life span control. The chain is Regulator of G-protein signaling loco (loco) from Drosophila melanogaster (Fruit fly).